A 413-amino-acid polypeptide reads, in one-letter code: Serine/threonine transporter SstT (413 aa).

The next 9 helical transmembrane spans lie at 15–35 (NIVI…TLAP), 48–68 (FVSA…AASI), 82–102 (VIVL…VMSF), 141–161 (ALMT…GLGL), 178–198 (CISA…FGLV), 216–236 (LLAV…PLIV), 290–310 (IPLG…VLTL), 330–350 (LVAA…LLLI), and 357–377 (FGIS…IGVV).

Belongs to the dicarboxylate/amino acid:cation symporter (DAACS) (TC 2.A.23) family.

The protein localises to the cell inner membrane. It carries out the reaction L-serine(in) + Na(+)(in) = L-serine(out) + Na(+)(out). The catalysed reaction is L-threonine(in) + Na(+)(in) = L-threonine(out) + Na(+)(out). Functionally, involved in the import of serine and threonine into the cell, with the concomitant import of sodium (symport system). This Aliivibrio fischeri (strain ATCC 700601 / ES114) (Vibrio fischeri) protein is Serine/threonine transporter SstT.